The primary structure comprises 170 residues: Bifunctional protein PyrR (170 aa).

A PRPP-binding motif is present at residues Leu-90–Thr-102.

Belongs to the purine/pyrimidine phosphoribosyltransferase family. PyrR subfamily.

It carries out the reaction UMP + diphosphate = 5-phospho-alpha-D-ribose 1-diphosphate + uracil. In terms of biological role, regulates the transcription of the pyrimidine nucleotide (pyr) operon in response to exogenous pyrimidines. Also displays a weak uracil phosphoribosyltransferase activity which is not physiologically significant. The protein is Bifunctional protein PyrR of Pseudomonas paraeruginosa (strain DSM 24068 / PA7) (Pseudomonas aeruginosa (strain PA7)).